We begin with the raw amino-acid sequence, 926 residues long: Disease resistance protein RPM1 (926 aa).

The leucine-zipper stretch occupies residues 10–45 (IGRILSVLENETLLLSGVHGEIDKMKKELLIMKSFL). The 315-residue stretch at 153–467 (DAKWVNNISE…AQRFVEPIRG (315 aa)) folds into the NB-ARC domain. 200–207 (GMGGSGKT) lines the ATP pocket. 11 LRR repeats span residues 561–580 (LHSLLVCSSAKHKMELLPSL), 581–603 (NLLRALDLEDSSISKLPDCLVTM), 605–625 (NLKYLNLSKTQVKELPKNFHK), 626–649 (LVNLETLNTKHSKIEELPLGMWKL), 686–707 (LQVMDCFNAEDELIKNLGCMTQ), 708–731 (LTRISLVMVRREHGRDLCDSLNKI), 756–777 (TASIEKLFLAGKLERVPSWFNT), 778–804 (LQNLTYLGLRGSQLQENAILSIQTLPR), 825–836 (FQNLKILEIVQM), 837–859 (KHLTEVVIEDGAMFELQKLYVRA), and 876–900 (LQELHLIHVSNQLVERIRGEGSVDR).

Belongs to the disease resistance NB-LRR family. Interacts directly with RIN4 via its N-terminal region. Interacts (via N-terminus) with RIN2 and RIN3 (via C-terminus). Interacts with TIP49A, a protein known to interact with the TATA binding protein complex (TBP). Binds to MORC1/CRT1. Interacts, via its NB-ARC domain, with RIN13.

The protein localises to the endomembrane system. Its subcellular location is the cell membrane. Disease resistance (R) protein that specifically recognizes the AvrRpm1 type III effector avirulence protein from Pseudomonas syringae. Resistance proteins guard the plant against pathogens that contain an appropriate avirulence protein via an indirect interaction with this avirulence protein. That triggers a defense system including the hypersensitive response (HR), which restricts the pathogen growth. Acts via its interaction with RIN4, and probably triggers the plant resistance when RIN4 is phosphorylated by AvrRpm1. It is then degraded at the onset of the hypersensitive response. The polypeptide is Disease resistance protein RPM1 (Arabidopsis thaliana (Mouse-ear cress)).